Here is a 418-residue protein sequence, read N- to C-terminus: Tyrosine--tRNA ligase (418 aa).

Tyr-34 lines the L-tyrosine pocket. A 'HIGH' region motif is present at residues 39–48; it reads PTADSLHLGH. 2 residues coordinate L-tyrosine: Tyr-169 and Gln-173. The short motif at 229-233 is the 'KMSKS' region element; the sequence is KFGKS. ATP is bound at residue Lys-232. The S4 RNA-binding domain maps to 352-418; sequence NNIVELLVSS…GKKKYFVLTY (67 aa).

The protein belongs to the class-I aminoacyl-tRNA synthetase family. TyrS type 1 subfamily. In terms of assembly, homodimer.

It is found in the cytoplasm. It catalyses the reaction tRNA(Tyr) + L-tyrosine + ATP = L-tyrosyl-tRNA(Tyr) + AMP + diphosphate + H(+). In terms of biological role, catalyzes the attachment of tyrosine to tRNA(Tyr) in a two-step reaction: tyrosine is first activated by ATP to form Tyr-AMP and then transferred to the acceptor end of tRNA(Tyr). This Streptococcus pneumoniae (strain 70585) protein is Tyrosine--tRNA ligase.